The primary structure comprises 266 residues: 14-3-3 protein homolog (266 aa).

The tract at residues 154-177 (KQAADQAQESYQKATETAEGHSPA) is disordered. A compositionally biased stretch (polar residues) spans 158-168 (DQAQESYQKAT).

It belongs to the 14-3-3 family.

The sequence is that of 14-3-3 protein homolog from Neospora caninum (Coccidian parasite).